Reading from the N-terminus, the 553-residue chain is MTKNYIFITGGVVSSLGKGIAAASLGAVLEARNLKITIMKLDPYINVDPGTMSPIQHGEVFVTEDGAETDLDLGHYERFIRTKMTCLNNFTTGSIYSEVLKKERRGDYLGSTIQVIPHITNAIKDRIILCSKNSDIILVEIGGTVGDIESLPFLEAIRQLAVDIGRKNVIYIHLTLVPYIKTAGEIKTKPTQHSVKELLSIGIQPDILICRSQKTVPINERKKIALFCNVPVNAVISLKDVDSIYTIPKLLKDQKLDNYICEYFKLNVPQADLKEWEKVIYEEKNASKEIIIGIIGKYIKLPDAYKSVIEALKHAGLKNKIKVKIELINSQEIENKNFKLLQNLNGILIPGGFGDRGIIGKLLSVQYARENNIPYFGICLGMQIAIIEFAQNVIGIKEANSTEFDPQCKFPVIDLIKTKKNDIKDTRQGKKNNKSNFGGTMRLGSQPCKLIFNSLSRKLYKKDTIIERHRHRYEVNNFLLKKIEKNGLKIAGRSKKNNIVEIIEIFDHPWFIGCQFHPEFTSTPRDGHPLFIDFIKSAKKNKKNNFKIKVKNV.

The amidoligase domain stretch occupies residues 1 to 266 (MTKNYIFITG…DNYICEYFKL (266 aa)). Serine 14 is a binding site for CTP. Serine 14 is a binding site for UTP. ATP-binding positions include 15-20 (SLGKGI) and aspartate 72. 2 residues coordinate Mg(2+): aspartate 72 and glutamate 140. CTP-binding positions include 147–149 (DIE), 187–192 (KTKPTQ), and lysine 223. Residues 187-192 (KTKPTQ) and lysine 223 contribute to the UTP site. Residue 239–241 (KDV) coordinates ATP. Residues 291-544 (IIGIIGKYIK…IKSAKKNKKN (254 aa)) enclose the Glutamine amidotransferase type-1 domain. Glycine 352 contacts L-glutamine. Cysteine 379 (nucleophile; for glutamine hydrolysis) is an active-site residue. L-glutamine is bound by residues 380 to 383 (LGMQ), glutamate 403, and arginine 472. Active-site residues include histidine 517 and glutamate 519.

The protein belongs to the CTP synthase family. In terms of assembly, homotetramer.

The enzyme catalyses UTP + L-glutamine + ATP + H2O = CTP + L-glutamate + ADP + phosphate + 2 H(+). The catalysed reaction is L-glutamine + H2O = L-glutamate + NH4(+). It catalyses the reaction UTP + NH4(+) + ATP = CTP + ADP + phosphate + 2 H(+). It functions in the pathway pyrimidine metabolism; CTP biosynthesis via de novo pathway; CTP from UDP: step 2/2. With respect to regulation, allosterically activated by GTP, when glutamine is the substrate; GTP has no effect on the reaction when ammonia is the substrate. The allosteric effector GTP functions by stabilizing the protein conformation that binds the tetrahedral intermediate(s) formed during glutamine hydrolysis. Inhibited by the product CTP, via allosteric rather than competitive inhibition. Catalyzes the ATP-dependent amination of UTP to CTP with either L-glutamine or ammonia as the source of nitrogen. Regulates intracellular CTP levels through interactions with the four ribonucleotide triphosphates. The chain is CTP synthase from Buchnera aphidicola subsp. Schizaphis graminum (strain Sg).